Here is a 250-residue protein sequence, read N- to C-terminus: tRNA (guanine-N(1)-)-methyltransferase (250 aa).

S-adenosyl-L-methionine contacts are provided by residues glycine 113 and 133-138 (IGDYVL).

The protein belongs to the RNA methyltransferase TrmD family. In terms of assembly, homodimer.

Its subcellular location is the cytoplasm. The enzyme catalyses guanosine(37) in tRNA + S-adenosyl-L-methionine = N(1)-methylguanosine(37) in tRNA + S-adenosyl-L-homocysteine + H(+). Functionally, specifically methylates guanosine-37 in various tRNAs. The protein is tRNA (guanine-N(1)-)-methyltransferase of Photorhabdus laumondii subsp. laumondii (strain DSM 15139 / CIP 105565 / TT01) (Photorhabdus luminescens subsp. laumondii).